Reading from the N-terminus, the 307-residue chain is Pseudouridine-5'-phosphate glycosidase (307 aa).

The Proton donor role is filled by glutamate 28. Substrate contacts are provided by lysine 89 and valine 109. Residue aspartate 141 coordinates Mn(2+). 143 to 145 (SAD) is a binding site for substrate. Lysine 162 functions as the Nucleophile in the catalytic mechanism.

It belongs to the pseudouridine-5'-phosphate glycosidase family. In terms of assembly, homotrimer. Requires Mn(2+) as cofactor.

It catalyses the reaction D-ribose 5-phosphate + uracil = psi-UMP + H2O. Functionally, catalyzes the reversible cleavage of pseudouridine 5'-phosphate (PsiMP) to ribose 5-phosphate and uracil. Functions biologically in the cleavage direction, as part of a pseudouridine degradation pathway. The polypeptide is Pseudouridine-5'-phosphate glycosidase (Alkaliphilus metalliredigens (strain QYMF)).